Reading from the N-terminus, the 247-residue chain is Probable transcriptional regulatory protein lpg1286 (247 aa).

Belongs to the TACO1 family.

The protein resides in the cytoplasm. This is Probable transcriptional regulatory protein lpg1286 from Legionella pneumophila subsp. pneumophila (strain Philadelphia 1 / ATCC 33152 / DSM 7513).